The following is a 74-amino-acid chain: Large ribosomal subunit protein bL31 (74 aa).

Zn(2+) is bound by residues Cys16, Cys18, Cys38, and Cys41.

This sequence belongs to the bacterial ribosomal protein bL31 family. Type A subfamily. In terms of assembly, part of the 50S ribosomal subunit. Zn(2+) is required as a cofactor.

Its function is as follows. Binds the 23S rRNA. This is Large ribosomal subunit protein bL31 (rpmE) from Streptomyces coelicolor (strain ATCC BAA-471 / A3(2) / M145).